Consider the following 110-residue polypeptide: Iron-sulfur cluster assembly protein CyaY (110 aa).

Belongs to the frataxin family.

In terms of biological role, involved in iron-sulfur (Fe-S) cluster assembly. May act as a regulator of Fe-S biogenesis. This chain is Iron-sulfur cluster assembly protein CyaY, found in Azotobacter vinelandii (strain DJ / ATCC BAA-1303).